We begin with the raw amino-acid sequence, 111 residues long: Phosphoribosyl-ATP pyrophosphatase (111 aa).

The protein belongs to the PRA-PH family.

It localises to the cytoplasm. The catalysed reaction is 1-(5-phospho-beta-D-ribosyl)-ATP + H2O = 1-(5-phospho-beta-D-ribosyl)-5'-AMP + diphosphate + H(+). The protein operates within amino-acid biosynthesis; L-histidine biosynthesis; L-histidine from 5-phospho-alpha-D-ribose 1-diphosphate: step 2/9. This Ectopseudomonas mendocina (strain ymp) (Pseudomonas mendocina) protein is Phosphoribosyl-ATP pyrophosphatase.